The primary structure comprises 392 residues: Odorant receptor 9a (392 aa).

Topologically, residues 1–41 (MSDKVKGKKQEEKDQSLRVQILVYRCMGIDLWSPTMANDRP) are cytoplasmic. A helical membrane pass occupies residues 42–62 (WLTFVTMGPLFLFMVPMFLAA). Topologically, residues 63-74 (HEYITQVSLLSD) are extracellular. The chain crosses the membrane as a helical span at residues 75 to 95 (TLGSTFASMLTLVKFLLFCYH). Topologically, residues 96-141 (RKEFVGLIYHIRAILAKEIEVWPDAREIIEVENQSDQMLSLTYTRC) are cytoplasmic. Residues 142–162 (FGLAGIFAALKPFVGIILSSI) form a helical membrane-spanning segment. At 163 to 202 (RGDEIHLELPHNGVYPYDLQVVMFYVPTYLWNVMASYSAV) the chain is on the extracellular side. The helical transmembrane segment at 203 to 223 (TMALCVDSLLFFFTYNVCAIF) threads the bilayer. At 224–268 (KIAKHRMIHLPAVGGKEELEGLVQVLLLHQKGLQIADHIADKYRP) the chain is on the cytoplasmic side. A helical transmembrane segment spans residues 269-289 (LIFLQFFLSALQICFIGFQVA). The Extracellular segment spans residues 290-297 (DLFPNPQS). The chain crosses the membrane as a helical span at residues 298-318 (LYFIAFVGSLLIALFIYSKCG). At 319–362 (ENIKSASLDFGNGLYETNWTDFSPPTKRALLIAAMRAQRPCQMK) the chain is on the cytoplasmic side. Residues 363–383 (GYFFEASMATFSTIVRSAVSY) traverse the membrane as a helical segment. Topologically, residues 384-392 (IMMLRSFNA) are extracellular.

It belongs to the insect chemoreceptor superfamily. Heteromeric odorant receptor channel (TC 1.A.69) family. Or1a subfamily. Interacts with Orco. Complexes exist early in the endomembrane system in olfactory sensory neurons (OSNs), coupling these complexes to the conserved ciliary trafficking pathway. As to expression, expressed in olfactory sensory neurons in the antenna.

The protein resides in the cell membrane. Its function is as follows. Odorant receptor which mediates acceptance or avoidance behavior, depending on its substrates. The odorant receptor repertoire encodes a large collection of odor stimuli that vary widely in identity, intensity, and duration. May form a complex with Orco to form odorant-sensing units, providing sensitive and prolonged odorant signaling and calcium permeability. This is Odorant receptor 9a (Or9a) from Drosophila melanogaster (Fruit fly).